The chain runs to 652 residues: 1,4-alpha-glucan branching enzyme GlgB (652 aa).

The active-site Nucleophile is aspartate 322. The Proton donor role is filled by glutamate 373.

The protein belongs to the glycosyl hydrolase 13 family. GlgB subfamily. As to quaternary structure, monomer.

The enzyme catalyses Transfers a segment of a (1-&gt;4)-alpha-D-glucan chain to a primary hydroxy group in a similar glucan chain.. It participates in glycan biosynthesis; glycogen biosynthesis. Its function is as follows. Catalyzes the formation of the alpha-1,6-glucosidic linkages in glycogen by scission of a 1,4-alpha-linked oligosaccharide from growing alpha-1,4-glucan chains and the subsequent attachment of the oligosaccharide to the alpha-1,6 position. This is 1,4-alpha-glucan branching enzyme GlgB from Deinococcus geothermalis (strain DSM 11300 / CIP 105573 / AG-3a).